A 543-amino-acid chain; its full sequence is Steroid receptor seven-up, isoforms B/C (543 aa).

The tract at residues 38–191 (PPHSAWHEPP…HSQSSNSGSQ (154 aa)) is disordered. Residues 56 to 68 (AASAGPGTTTGSV) are compositionally biased toward low complexity. Positions 83-101 (QQSAVIKQDLSCPSLNQAG) are enriched in polar residues. Over residues 122–141 (GSAGGHHSGSGSGSGSGVNP) the composition is skewed to gly residues. The segment covering 158-170 (MLTSIKGQPTGCG) has biased composition (polar residues). A compositionally biased stretch (low complexity) spans 171–191 (STTPSSQANSSHSQSSNSGSQ). The segment at residues 197–272 (NIECVVCGDK…MGMRREAVQR (76 aa)) is a DNA-binding region (nuclear receptor). 2 NR C4-type zinc fingers span residues 200–220 (CVVC…CEGC) and 236–260 (CRGS…LKKC). The 226-residue stretch at 307–532 (YLSSYISLLL…TLIRDMLLSG (226 aa)) folds into the NR LBD domain.

This sequence belongs to the nuclear hormone receptor family. NR2 subfamily. Expressed in several embryonic tissues; dorsal vessel, oenocyte and fat body. CNS expression is dynamic and confined to temporally restricted subsections of the NB lineage; expressed in many NB and GMCs, but only a small number of neurons.

The protein resides in the nucleus. In terms of biological role, receptor that is required in photoreceptors R1, R3, R4 and R6 during eye development; generation of the ganglion mother cell-2 (GMC-2) fate in the nb7-3 lineage, coinciding with the transition in the expression of HB to KR in the neuroblasts (NBs). The chain is Steroid receptor seven-up, isoforms B/C (svp) from Drosophila melanogaster (Fruit fly).